Here is a 157-residue protein sequence, read N- to C-terminus: MRIGHGYDVHRFAEGDFITLGGVRIAHGFGLLAHSDGDVLLHALSDALLGAAALGDIGKHFPDTDPQFKGADSRVLLRHVLKQIHGKGWKVGNVDATIVAQAPKMAPHIDAMRALIAEDLQVELDQVNVKATTTEKLGFTGREEGIAVHAVALLLRA.

Positions 8 and 10 each coordinate a divalent metal cation. 4-CDP-2-C-methyl-D-erythritol 2-phosphate contacts are provided by residues 8–10 (DVH) and 34–35 (HS). His42 contacts a divalent metal cation. Residues 56 to 58 (DIG), 61 to 65 (FPDTD), 100 to 106 (AQAPKMA), 132 to 135 (TTTE), Phe139, and Arg142 contribute to the 4-CDP-2-C-methyl-D-erythritol 2-phosphate site.

Belongs to the IspF family. As to quaternary structure, homotrimer. The cofactor is a divalent metal cation.

It carries out the reaction 4-CDP-2-C-methyl-D-erythritol 2-phosphate = 2-C-methyl-D-erythritol 2,4-cyclic diphosphate + CMP. Its pathway is isoprenoid biosynthesis; isopentenyl diphosphate biosynthesis via DXP pathway; isopentenyl diphosphate from 1-deoxy-D-xylulose 5-phosphate: step 4/6. Functionally, involved in the biosynthesis of isopentenyl diphosphate (IPP) and dimethylallyl diphosphate (DMAPP), two major building blocks of isoprenoid compounds. Catalyzes the conversion of 4-diphosphocytidyl-2-C-methyl-D-erythritol 2-phosphate (CDP-ME2P) to 2-C-methyl-D-erythritol 2,4-cyclodiphosphate (ME-CPP) with a corresponding release of cytidine 5-monophosphate (CMP). The protein is 2-C-methyl-D-erythritol 2,4-cyclodiphosphate synthase of Pseudomonas savastanoi pv. phaseolicola (strain 1448A / Race 6) (Pseudomonas syringae pv. phaseolicola (strain 1448A / Race 6)).